Reading from the N-terminus, the 248-residue chain is Tyrosine recombinase XerD-like (248 aa).

Residues 1–72 enclose the Core-binding (CB) domain; sequence MKSYIEPFIA…TANQFLYYLY (72 aa). The 164-residue stretch at 85-248 folds into the Tyr recombinase domain; sequence DTMKVMRTEK…PVTLEKYYKS (164 aa). Catalysis depends on residues K149 and R213. Y245 functions as the O-(3'-phospho-DNA)-tyrosine intermediate in the catalytic mechanism.

Belongs to the 'phage' integrase family. XerD-like subfamily.

It localises to the cytoplasm. Its function is as follows. Putative tyrosine recombinase. Not involved in the cutting and rejoining of the recombining DNA molecules on dif(SL) site. The polypeptide is Tyrosine recombinase XerD-like (Streptococcus pyogenes serotype M18 (strain MGAS8232)).